Reading from the N-terminus, the 539-residue chain is Phosphoenolpyruvate carboxykinase (ATP) (539 aa).

Substrate-binding residues include arginine 64, tyrosine 206, and lysine 212. Residues lysine 212, histidine 231, and 247 to 255 (GLSGTGKTT) contribute to the ATP site. Mn(2+) is bound by residues lysine 212 and histidine 231. Aspartate 268 contacts Mn(2+). Residues glutamate 296, arginine 332, 448 to 449 (RI), and threonine 454 contribute to the ATP site. Residue arginine 332 coordinates substrate.

Belongs to the phosphoenolpyruvate carboxykinase (ATP) family. As to quaternary structure, monomer. Mn(2+) is required as a cofactor.

The protein resides in the cytoplasm. It carries out the reaction oxaloacetate + ATP = phosphoenolpyruvate + ADP + CO2. Its pathway is carbohydrate biosynthesis; gluconeogenesis. Involved in the gluconeogenesis. Catalyzes the conversion of oxaloacetate (OAA) to phosphoenolpyruvate (PEP) through direct phosphoryl transfer between the nucleoside triphosphate and OAA. In Yersinia pestis bv. Antiqua (strain Antiqua), this protein is Phosphoenolpyruvate carboxykinase (ATP).